A 245-amino-acid chain; its full sequence is 1-(5-phosphoribosyl)-5-[(5-phosphoribosylamino)methylideneamino] imidazole-4-carboxamide isomerase (245 aa).

The active-site Proton acceptor is the Asp-7. Asp-129 functions as the Proton donor in the catalytic mechanism.

It belongs to the HisA/HisF family.

It localises to the cytoplasm. It catalyses the reaction 1-(5-phospho-beta-D-ribosyl)-5-[(5-phospho-beta-D-ribosylamino)methylideneamino]imidazole-4-carboxamide = 5-[(5-phospho-1-deoxy-D-ribulos-1-ylimino)methylamino]-1-(5-phospho-beta-D-ribosyl)imidazole-4-carboxamide. Its pathway is amino-acid biosynthesis; L-histidine biosynthesis; L-histidine from 5-phospho-alpha-D-ribose 1-diphosphate: step 4/9. The chain is 1-(5-phosphoribosyl)-5-[(5-phosphoribosylamino)methylideneamino] imidazole-4-carboxamide isomerase from Shigella boydii serotype 4 (strain Sb227).